Here is a 146-residue protein sequence, read N- to C-terminus: Cyanate hydratase (146 aa).

Residues arginine 87, glutamate 90, and serine 113 contribute to the active site.

This sequence belongs to the cyanase family.

It catalyses the reaction cyanate + hydrogencarbonate + 3 H(+) = NH4(+) + 2 CO2. Functionally, catalyzes the reaction of cyanate with bicarbonate to produce ammonia and carbon dioxide. In Teredinibacter turnerae (strain ATCC 39867 / T7901), this protein is Cyanate hydratase.